The sequence spans 379 residues: Putative cyclic ADP-D-ribose synthase TIR2 (379 aa).

The region spanning 254–379 is the TIR domain; the sequence is KVYDVFISHS…TISWTTGLVK (126 aa). E335 is an active-site residue.

As to quaternary structure, homodimer.

It is found in the cytoplasm. Its activity is regulated as follows. Activated upon phage infection. In terms of biological role, one of 2 TIR-like protein components of the Thoeris antiviral defense system, composed of ThsA, TIR1 (thsB1) and TIR2 (thsB2). Phage infection activates this protein; by 70 minutes post-infection with phage SPO1, TIR2 generates a signal molecule that in turn activates the NAD(+) hydrolase activity of ThsA (tested with B.cereus). The signal is similar to cyclic ADP-D-ribose, but how it differs is unknown. Expression of Thoeris in B.subtilis (strain BEST7003) confers resistance to phages phi29, phi3T, SPBeta, SBSphi11, SBSphi13, SBSphiJ, SPO1 and SPR but not SBSphiC. The TIR paralogs confer resistance to different phages; this subunit confers resistance to phi3T, SPBeta, SBSphi13, SBSphiJ, SPO1 and SPR but not phi29, SBSphi11 or SBSphiC. There is overlap in the phage range for this system, both TIR1 and TIR2 are activated by SBSphi13, SBSphiJ, SPO1 and SPR. Probably hydrolyzes NAD(+) to make a cyclic ADP-D-ribose (cADPR) signaling molecule; might make 3'cADPR. The protein is Putative cyclic ADP-D-ribose synthase TIR2 of Cytobacillus dafuensis (Bacillus dafuensis).